Here is a 207-residue protein sequence, read N- to C-terminus: Large ribosomal subunit protein uL4 (207 aa).

The tract at residues histidine 49–isoleucine 78 is disordered.

Belongs to the universal ribosomal protein uL4 family. In terms of assembly, part of the 50S ribosomal subunit.

Its function is as follows. One of the primary rRNA binding proteins, this protein initially binds near the 5'-end of the 23S rRNA. It is important during the early stages of 50S assembly. It makes multiple contacts with different domains of the 23S rRNA in the assembled 50S subunit and ribosome. Forms part of the polypeptide exit tunnel. In Streptococcus sanguinis (strain SK36), this protein is Large ribosomal subunit protein uL4.